Reading from the N-terminus, the 356-residue chain is Probable dual-specificity RNA methyltransferase RlmN (356 aa).

The active-site Proton acceptor is the glutamate 97. Residues 103-333 form the Radical SAM core domain; that stretch reads YHHGNSVCIS…VTIRREMGSD (231 aa). Cysteines 110 and 338 form a disulfide. 3 residues coordinate [4Fe-4S] cluster: cysteine 117, cysteine 121, and cysteine 124. Residues 164 to 165, serine 196, 219 to 221, and asparagine 295 contribute to the S-adenosyl-L-methionine site; these read GE and SLH. The active-site S-methylcysteine intermediate is the cysteine 338.

It belongs to the radical SAM superfamily. RlmN family. Requires [4Fe-4S] cluster as cofactor.

The protein localises to the cytoplasm. It catalyses the reaction adenosine(2503) in 23S rRNA + 2 reduced [2Fe-2S]-[ferredoxin] + 2 S-adenosyl-L-methionine = 2-methyladenosine(2503) in 23S rRNA + 5'-deoxyadenosine + L-methionine + 2 oxidized [2Fe-2S]-[ferredoxin] + S-adenosyl-L-homocysteine. The catalysed reaction is adenosine(37) in tRNA + 2 reduced [2Fe-2S]-[ferredoxin] + 2 S-adenosyl-L-methionine = 2-methyladenosine(37) in tRNA + 5'-deoxyadenosine + L-methionine + 2 oxidized [2Fe-2S]-[ferredoxin] + S-adenosyl-L-homocysteine. Its function is as follows. Specifically methylates position 2 of adenine 2503 in 23S rRNA and position 2 of adenine 37 in tRNAs. The polypeptide is Probable dual-specificity RNA methyltransferase RlmN (Lachnoclostridium phytofermentans (strain ATCC 700394 / DSM 18823 / ISDg) (Clostridium phytofermentans)).